The following is a 483-amino-acid chain: 6-phosphogluconate dehydrogenase, decarboxylating (483 aa).

Residues 10–15 (GLAVMG) and 33–35 (NRT) contribute to the NADP(+) site. Lysine 38 carries the N6-acetyllysine modification. Serine 57 carries the post-translational modification Phosphoserine. Lysine 59 carries the post-translational modification N6-acetyllysine. Residues 75-77 (VKA) and asparagine 103 each bind NADP(+). Substrate is bound by residues asparagine 103 and 129 to 131 (SGG). Serine 129 is subject to Phosphoserine. Lysine 184 (proton acceptor) is an active-site residue. 187 to 188 (HN) is a substrate binding site. Residue glutamate 191 is the Proton donor of the active site. The substrate site is built by tyrosine 192, lysine 261, arginine 288, arginine 447, and histidine 453. Residue 478-481 (SSSY) participates in NADP(+) binding.

The protein belongs to the 6-phosphogluconate dehydrogenase family. Homodimer.

The protein resides in the cytoplasm. It carries out the reaction 6-phospho-D-gluconate + NADP(+) = D-ribulose 5-phosphate + CO2 + NADPH. It functions in the pathway carbohydrate degradation; pentose phosphate pathway; D-ribulose 5-phosphate from D-glucose 6-phosphate (oxidative stage): step 3/3. In terms of biological role, catalyzes the oxidative decarboxylation of 6-phosphogluconate to ribulose 5-phosphate and CO(2), with concomitant reduction of NADP to NADPH. The protein is 6-phosphogluconate dehydrogenase, decarboxylating of Rattus norvegicus (Rat).